We begin with the raw amino-acid sequence, 154 residues long: 6,7-dimethyl-8-ribityllumazine synthase (154 aa).

5-amino-6-(D-ribitylamino)uracil is bound by residues F24, 56–58 (SFE), and 80–82 (AVV). (2S)-2-hydroxy-3-oxobutyl phosphate is bound at residue 85–86 (ET). H88 serves as the catalytic Proton donor. F113 serves as a coordination point for 5-amino-6-(D-ribitylamino)uracil. Residue R127 coordinates (2S)-2-hydroxy-3-oxobutyl phosphate.

This sequence belongs to the DMRL synthase family.

It catalyses the reaction (2S)-2-hydroxy-3-oxobutyl phosphate + 5-amino-6-(D-ribitylamino)uracil = 6,7-dimethyl-8-(1-D-ribityl)lumazine + phosphate + 2 H2O + H(+). It functions in the pathway cofactor biosynthesis; riboflavin biosynthesis; riboflavin from 2-hydroxy-3-oxobutyl phosphate and 5-amino-6-(D-ribitylamino)uracil: step 1/2. Catalyzes the formation of 6,7-dimethyl-8-ribityllumazine by condensation of 5-amino-6-(D-ribitylamino)uracil with 3,4-dihydroxy-2-butanone 4-phosphate. This is the penultimate step in the biosynthesis of riboflavin. The polypeptide is 6,7-dimethyl-8-ribityllumazine synthase (Thermococcus gammatolerans (strain DSM 15229 / JCM 11827 / EJ3)).